The primary structure comprises 145 residues: D-aminoacyl-tRNA deacylase (145 aa).

Residues 137 to 138 (GP) carry the Gly-cisPro motif, important for rejection of L-amino acids motif.

It belongs to the DTD family. As to quaternary structure, homodimer.

The protein localises to the cytoplasm. It catalyses the reaction glycyl-tRNA(Ala) + H2O = tRNA(Ala) + glycine + H(+). It carries out the reaction a D-aminoacyl-tRNA + H2O = a tRNA + a D-alpha-amino acid + H(+). Functionally, an aminoacyl-tRNA editing enzyme that deacylates mischarged D-aminoacyl-tRNAs. Also deacylates mischarged glycyl-tRNA(Ala), protecting cells against glycine mischarging by AlaRS. Acts via tRNA-based rather than protein-based catalysis; rejects L-amino acids rather than detecting D-amino acids in the active site. By recycling D-aminoacyl-tRNA to D-amino acids and free tRNA molecules, this enzyme counteracts the toxicity associated with the formation of D-aminoacyl-tRNA entities in vivo and helps enforce protein L-homochirality. This is D-aminoacyl-tRNA deacylase from Shewanella halifaxensis (strain HAW-EB4).